Consider the following 642-residue polypeptide: Threonine--tRNA ligase (642 aa).

Positions 1–61 (MPVIRFYDGS…REDAFIEFVD (61 aa)) constitute a TGS domain. The tract at residues 243-534 (DHRKIGKFLQ…LIEECSGNLP (292 aa)) is catalytic. Positions 334, 385, and 511 each coordinate Zn(2+).

It belongs to the class-II aminoacyl-tRNA synthetase family. Homodimer. Zn(2+) is required as a cofactor.

It is found in the cytoplasm. The catalysed reaction is tRNA(Thr) + L-threonine + ATP = L-threonyl-tRNA(Thr) + AMP + diphosphate + H(+). Catalyzes the attachment of threonine to tRNA(Thr) in a two-step reaction: L-threonine is first activated by ATP to form Thr-AMP and then transferred to the acceptor end of tRNA(Thr). Also edits incorrectly charged L-seryl-tRNA(Thr). This chain is Threonine--tRNA ligase, found in Buchnera aphidicola subsp. Acyrthosiphon pisum (strain Tuc7).